Consider the following 335-residue polypeptide: N-acetyl-gamma-glutamyl-phosphate reductase (335 aa).

Cys147 is a catalytic residue.

The protein belongs to the NAGSA dehydrogenase family. Type 1 subfamily.

The protein resides in the cytoplasm. The catalysed reaction is N-acetyl-L-glutamate 5-semialdehyde + phosphate + NADP(+) = N-acetyl-L-glutamyl 5-phosphate + NADPH + H(+). It participates in amino-acid biosynthesis; L-arginine biosynthesis; N(2)-acetyl-L-ornithine from L-glutamate: step 3/4. Catalyzes the NADPH-dependent reduction of N-acetyl-5-glutamyl phosphate to yield N-acetyl-L-glutamate 5-semialdehyde. This is N-acetyl-gamma-glutamyl-phosphate reductase from Sulfurovum sp. (strain NBC37-1).